The chain runs to 374 residues: MAKRDYYEVLGVSKTSTEQEIKSAYRKLAKKYHPDMNKESGAEEKFKEVNEAASVLLDADKKAKYDQFGHAAFDGSSGFGGSGFGGFEDFFSNMGGGMDFGDIFSDLFGGGRSGRSSRRGPSKGQDIGLEATLTFKELVFGVNKKTILNLVKTCTKCDGVGAENPSDVHICTKCNGAGQIIVNKQMGPFQVQNQVTCDKCNGVGKEFKSKCKNCHGKGVESKREEVEIPLPKGLWPGQQFVMRGKGHASLEGGIPGDLYITIGIVKSDVFELIPNSNDLIMNYNISYLDAILGNEVIIKTLDGPVRLKIPKGVYSGQLIKVHDKGLYKNQTSDKRGDLLIKISISIPTSVSKEEKKILKELEQLSNFEPKNIID.

Residues Asp5 to Gly69 form the J domain. A CR-type zinc finger spans residues Gly141 to Arg223. Residues Cys154, Cys157, Cys171, Cys174, Cys197, Cys200, Cys211, and Cys214 each coordinate Zn(2+). CXXCXGXG motif repeat units follow at residues Cys154–Gly161, Cys171–Gly178, Cys197–Gly204, and Cys211–Gly218.

The protein belongs to the DnaJ family. In terms of assembly, homodimer. The cofactor is Zn(2+).

The protein localises to the cytoplasm. Its function is as follows. Participates actively in the response to hyperosmotic and heat shock by preventing the aggregation of stress-denatured proteins and by disaggregating proteins, also in an autonomous, DnaK-independent fashion. Unfolded proteins bind initially to DnaJ; upon interaction with the DnaJ-bound protein, DnaK hydrolyzes its bound ATP, resulting in the formation of a stable complex. GrpE releases ADP from DnaK; ATP binding to DnaK triggers the release of the substrate protein, thus completing the reaction cycle. Several rounds of ATP-dependent interactions between DnaJ, DnaK and GrpE are required for fully efficient folding. Also involved, together with DnaK and GrpE, in the DNA replication of plasmids through activation of initiation proteins. The protein is Chaperone protein DnaJ of Mesoplasma florum (strain ATCC 33453 / NBRC 100688 / NCTC 11704 / L1) (Acholeplasma florum).